The following is an 898-amino-acid chain: Metalloprotease StcE (898 aa).

An N-terminal signal peptide occupies residues 1 to 35 (MNTKMNERWRTPMKLKYLSCTILAPLAIGVFSATA). Residues 296 to 551 (ELLLHTIDIG…QRFFENKAVF (256 aa)) form the Peptidase M66 domain. H446 is a Zn(2+) binding site. Residue E447 is part of the active site. Residues H450 and H456 each contribute to the Zn(2+) site.

The cofactor is Zn(2+).

Its subcellular location is the secreted. Inhibited by divalent cation chelators such as BPS and EDTA. In terms of biological role, virulence factor that contributes to intimate adherence of enterohemorrhagic E.coli (EHEC) O157:H7 to host cells. Is able to cleave the secreted human mucin 7 (MUC7) and the glycoprotein 340 (DMBT1/GP340). Also cleaves human C1 inhibitor (SERPING1), a regulator of multiple inflammatory pathways, and binds and localizes it to bacterial and host cell surfaces, protecting them from complement-mediated lysis. Therefore, the current model proposes two roles for StcE during infection: it acts first as a mucinase, allowing passage of EHEC through the oral cavity by cleaving the salivary glycoproteins that are responsible for bacterial aggregation. Similarly, in the colon, StcE cleaves the glycoproteins that protect the intestinal epithelial surface, allowing EHEC to come into close contact with host cell membranes. Secondly, it acts as an anti-inflammatory agent by localizing SERPING1 to cell membranes. The sequence is that of Metalloprotease StcE (stcE) from Escherichia coli O157:H7.